The sequence spans 337 residues: Glycerol-3-phosphate dehydrogenase [NAD(P)+] (337 aa).

NADPH is bound by residues serine 12, tryptophan 13, and lysine 110. Residues lysine 110, glycine 141, and serine 143 each coordinate sn-glycerol 3-phosphate. Residue alanine 145 coordinates NADPH. Sn-glycerol 3-phosphate contacts are provided by lysine 196, aspartate 249, serine 259, arginine 260, and asparagine 261. Lysine 196 serves as the catalytic Proton acceptor. NADPH is bound at residue arginine 260. Residues valine 284 and glutamate 286 each contribute to the NADPH site.

Belongs to the NAD-dependent glycerol-3-phosphate dehydrogenase family.

The protein localises to the cytoplasm. It catalyses the reaction sn-glycerol 3-phosphate + NAD(+) = dihydroxyacetone phosphate + NADH + H(+). The catalysed reaction is sn-glycerol 3-phosphate + NADP(+) = dihydroxyacetone phosphate + NADPH + H(+). It functions in the pathway membrane lipid metabolism; glycerophospholipid metabolism. Catalyzes the reduction of the glycolytic intermediate dihydroxyacetone phosphate (DHAP) to sn-glycerol 3-phosphate (G3P), the key precursor for phospholipid synthesis. The polypeptide is Glycerol-3-phosphate dehydrogenase [NAD(P)+] (Levilactobacillus brevis (strain ATCC 367 / BCRC 12310 / CIP 105137 / JCM 1170 / LMG 11437 / NCIMB 947 / NCTC 947) (Lactobacillus brevis)).